We begin with the raw amino-acid sequence, 281 residues long: Bifunctional protein FolD (281 aa).

NADP(+) is bound by residues 165–167 (GRG), threonine 192, and valine 233.

This sequence belongs to the tetrahydrofolate dehydrogenase/cyclohydrolase family. As to quaternary structure, homodimer.

The enzyme catalyses (6R)-5,10-methylene-5,6,7,8-tetrahydrofolate + NADP(+) = (6R)-5,10-methenyltetrahydrofolate + NADPH. The catalysed reaction is (6R)-5,10-methenyltetrahydrofolate + H2O = (6R)-10-formyltetrahydrofolate + H(+). The protein operates within one-carbon metabolism; tetrahydrofolate interconversion. Catalyzes the oxidation of 5,10-methylenetetrahydrofolate to 5,10-methenyltetrahydrofolate and then the hydrolysis of 5,10-methenyltetrahydrofolate to 10-formyltetrahydrofolate. The polypeptide is Bifunctional protein FolD (Mycobacterium tuberculosis (strain ATCC 25177 / H37Ra)).